Reading from the N-terminus, the 643-residue chain is Methyl-accepting chemotaxis protein McpA (643 aa).

The helical transmembrane segment at 24-44 (ILLSACGVVVLAFALFTLYND) threads the bilayer. In terms of domain architecture, Cache spans 49–273 (NTIRQNIEAS…GLPSAQWYIG (225 aa)). A helical transmembrane segment spans residues 293–313 (IIAMLIAVAAIAGLLGLLIPV). The HAMP domain occupies 312–366 (PVLMSPLTTMGRAMRDIAEGEGDLTRRLAVQNKDEFGELATSFNRFVERIHASIS). A Methyl-accepting transducer domain is found at 371–607 (ATRLVHDLSE…SLNLDITQIN (237 aa)).

It belongs to the methyl-accepting chemotaxis (MCP) protein family.

It localises to the cell membrane. In terms of biological role, chemotactic-signal transducers respond to changes in the concentration of attractants and repellents in the environment, transduce a signal from the outside to the inside of the cell, and facilitate sensory adaptation through the variation of the level of methylation. McpA is a chemoreceptor that binds to 12 different L-amino acids and mediates chemotaxis toward these amino acids. This chain is Methyl-accepting chemotaxis protein McpA, found in Pseudomonas putida (strain ATCC 47054 / DSM 6125 / CFBP 8728 / NCIMB 11950 / KT2440).